The primary structure comprises 282 residues: Caspase-3 (282 aa).

Catalysis depends on residues H131 and C174.

It belongs to the peptidase C14A family. In terms of assembly, heterotetramer that consists of two anti-parallel arranged heterodimers, each one formed by a 17 kDa (p17) and a 12 kDa (p12) subunit.

It localises to the cytoplasm. It carries out the reaction Strict requirement for an Asp residue at positions P1 and P4. It has a preferred cleavage sequence of Asp-Xaa-Xaa-Asp-|- with a hydrophobic amino-acid residue at P2 and a hydrophilic amino-acid residue at P3, although Val or Ala are also accepted at this position.. Important mediator of apoptosis. At the onset of apoptosis, it proteolytically cleaves poly(ADP-ribose) polymerase PARP1 at a '216-Asp-|-Gly-217' bond. The chain is Caspase-3 (casp3) from Xenopus laevis (African clawed frog).